Reading from the N-terminus, the 298-residue chain is Tyrosine recombinase XerC (298 aa).

The region spanning 1-84 is the Core-binding (CB) domain; that stretch reads MNHIQEAFLN…TLRTFYEYWM (84 aa). The Tyr recombinase domain maps to 105-286; that stretch reads YLPQFFYEEE…SNQQLRKVYL (182 aa). Active-site residues include Arg145, Lys169, His238, Arg241, and His264. The active-site O-(3'-phospho-DNA)-tyrosine intermediate is the Tyr273.

This sequence belongs to the 'phage' integrase family. XerC subfamily. Forms a cyclic heterotetrameric complex composed of two molecules of XerC and two molecules of XerD.

The protein resides in the cytoplasm. Functionally, site-specific tyrosine recombinase, which acts by catalyzing the cutting and rejoining of the recombining DNA molecules. The XerC-XerD complex is essential to convert dimers of the bacterial chromosome into monomers to permit their segregation at cell division. It also contributes to the segregational stability of plasmids. The sequence is that of Tyrosine recombinase XerC from Staphylococcus aureus (strain bovine RF122 / ET3-1).